We begin with the raw amino-acid sequence, 124 residues long: Small ribosomal subunit protein uS12 (124 aa).

Asp89 is subject to 3-methylthioaspartic acid.

It belongs to the universal ribosomal protein uS12 family. Part of the 30S ribosomal subunit. Contacts proteins S8 and S17. May interact with IF1 in the 30S initiation complex.

Its function is as follows. With S4 and S5 plays an important role in translational accuracy. Interacts with and stabilizes bases of the 16S rRNA that are involved in tRNA selection in the A site and with the mRNA backbone. Located at the interface of the 30S and 50S subunits, it traverses the body of the 30S subunit contacting proteins on the other side and probably holding the rRNA structure together. The combined cluster of proteins S8, S12 and S17 appears to hold together the shoulder and platform of the 30S subunit. The chain is Small ribosomal subunit protein uS12 from Shewanella putrefaciens (strain CN-32 / ATCC BAA-453).